The following is a 368-amino-acid chain: Peptide chain release factor 2 (368 aa).

Gln-249 bears the N5-methylglutamine mark.

The protein belongs to the prokaryotic/mitochondrial release factor family. In terms of processing, methylated by PrmC. Methylation increases the termination efficiency of RF2.

The protein localises to the cytoplasm. Its function is as follows. Peptide chain release factor 2 directs the termination of translation in response to the peptide chain termination codons UGA and UAA. In Rhodococcus erythropolis (strain PR4 / NBRC 100887), this protein is Peptide chain release factor 2.